Here is a 342-residue protein sequence, read N- to C-terminus: Methionyl-tRNA formyltransferase (342 aa).

119–122 (SILP) contributes to the (6S)-5,6,7,8-tetrahydrofolate binding site.

The protein belongs to the Fmt family.

It catalyses the reaction L-methionyl-tRNA(fMet) + (6R)-10-formyltetrahydrofolate = N-formyl-L-methionyl-tRNA(fMet) + (6S)-5,6,7,8-tetrahydrofolate + H(+). Its function is as follows. Attaches a formyl group to the free amino group of methionyl-tRNA(fMet). The formyl group appears to play a dual role in the initiator identity of N-formylmethionyl-tRNA by promoting its recognition by IF2 and preventing the misappropriation of this tRNA by the elongation apparatus. This chain is Methionyl-tRNA formyltransferase, found in Nostoc sp. (strain PCC 7120 / SAG 25.82 / UTEX 2576).